We begin with the raw amino-acid sequence, 313 residues long: MSQEFAHLSVLLTETVAGLNIKEDGIYIDGTFGRGGHSREVLKHLGENGRLIAIDRDPQAIEAAKQFADDARFSIVHGGFGQLATYVEELGLKGKIDGVLLDFGVSSPQLDDAERGFSFLRDGPLDMRMDNSQGETAADWLARAEVEDMAWVFKTYGEEKNSRHIARCIAADREKTPFLRTKELADLIARISKSKERNKHPATRVFQAIRIYINSELEQIDQALEGALTVLAPQGRLSVISFHSLEDRMVKRFIRRHSQGESVPHGLPITEAEINKTRLLKGVGKAIKPSDEEIERNTRARSSVLRVAQRLEH.

S-adenosyl-L-methionine is bound by residues 35–37 (GGH), D55, F80, D102, and Q109.

Belongs to the methyltransferase superfamily. RsmH family.

It localises to the cytoplasm. It carries out the reaction cytidine(1402) in 16S rRNA + S-adenosyl-L-methionine = N(4)-methylcytidine(1402) in 16S rRNA + S-adenosyl-L-homocysteine + H(+). Its function is as follows. Specifically methylates the N4 position of cytidine in position 1402 (C1402) of 16S rRNA. The chain is Ribosomal RNA small subunit methyltransferase H from Shewanella woodyi (strain ATCC 51908 / MS32).